The following is a 371-amino-acid chain: Cell division control protein 3 (371 aa).

One can recognise a Septin-type G domain in the interval 22-307; sequence AGIDFNIMTV…DEYKTREIGL (286 aa). Residues 32-39 are G1 motif; it reads GSNGLGKS. GTP contacts are provided by residues 32 to 39, G116, 195 to 203, and R257; these read GSNGLGKS and KSDLLSDSE. Residues 113–116 are G3 motif; it reads EVDG. Residues 194-197 are G4 motif; sequence GKSD.

Belongs to the TRAFAC class TrmE-Era-EngA-EngB-Septin-like GTPase superfamily. Septin GTPase family. In terms of assembly, component of the septin complex.

Functionally, septins are GTPases involved in cytokinesis. The septins localize to the site of cleavage and act as a structural scaffold that recruits different components involved in diverse processes at specific stages during the cell cycle. Septins are also involved in cell morphogenesis, chitin deposition, cell cycle regulation, cell compartmentalization and spore wall formation. The sequence is that of Cell division control protein 3 (CDC3) from Encephalitozoon cuniculi (strain GB-M1) (Microsporidian parasite).